Here is a 216-residue protein sequence, read N- to C-terminus: 3-isopropylmalate dehydratase small subunit (216 aa).

This sequence belongs to the LeuD family. LeuD type 1 subfamily. Heterodimer of LeuC and LeuD.

The enzyme catalyses (2R,3S)-3-isopropylmalate = (2S)-2-isopropylmalate. Its pathway is amino-acid biosynthesis; L-leucine biosynthesis; L-leucine from 3-methyl-2-oxobutanoate: step 2/4. Functionally, catalyzes the isomerization between 2-isopropylmalate and 3-isopropylmalate, via the formation of 2-isopropylmaleate. The polypeptide is 3-isopropylmalate dehydratase small subunit (Ralstonia nicotianae (strain ATCC BAA-1114 / GMI1000) (Ralstonia solanacearum)).